The chain runs to 97 residues: uncharacterized protein (97 aa).

The 94-residue stretch at Ile-2–Tyr-95 folds into the Stress-response A/B barrel domain.

This is an uncharacterized protein from Streptomyces coelicolor (strain ATCC BAA-471 / A3(2) / M145).